The primary structure comprises 1456 residues: Sterol 3-beta-glucosyltransferase (1456 aa).

Positions 60-70 (ESDEEDGDEVE) are enriched in acidic residues. Disordered regions lie at residues 60–113 (ESDE…SISH) and 128–156 (LSPH…TQSE). The span at 71 to 104 (TPSTTTTAVSPSATMSAPSPTATAPTPHSGTHTP) shows a compositional bias: low complexity. Basic and acidic residues predominate over residues 137 to 146 (SSHEASRRGS). The GRAM 1 domain maps to 200 to 247 (QKLKGFAALDVDEQLIADYPVWLLKNVLIQGHLYITAKHMCFLSYLPR). One can recognise a PH domain in the interval 251-351 (ANIRSGTLVK…WVKALQKEIF (101 aa)). Disordered regions lie at residues 462–512 (HSAH…PRLP) and 524–776 (DKCD…QDTF). Basic and acidic residues predominate over residues 496–508 (QPHERDEKRDSKL). Over residues 556–567 (LASQRTSSSTLF) the composition is skewed to polar residues. Composition is skewed to low complexity over residues 576 to 606 (SQPT…PASA) and 647 to 676 (GGAT…SSPG). Over residues 677-696 (TPGGLGGPGAVGAGGPGVMG) the composition is skewed to gly residues. Positions 719 to 735 (APHDPAAAAAAADAAAP) are enriched in low complexity. Positions 827 to 893 (ERFQKRFALG…KVVENATKDS (67 aa)) constitute a GRAM 2 domain. 12 residues coordinate UDP-alpha-D-glucose: serine 1004, arginine 1005, aspartate 1007, asparagine 1279, asparagine 1307, histidine 1310, histidine 1323, serine 1326, glycine 1327, threonine 1328, aspartate 1347, and glutamine 1348.

It belongs to the glycosyltransferase 28 family.

Its subcellular location is the cytoplasm. The protein resides in the membrane. The catalysed reaction is a sterol + UDP-alpha-D-glucose = a sterol 3-beta-D-glucoside + UDP + H(+). It catalyses the reaction ergosterol + UDP-alpha-D-glucose = ergosteryl 3-beta-D-glucoside + UDP + H(+). In terms of biological role, sterol glycosyltransferase responsible for the glycosylation of ergosterol to form ergosterol-glucoside. The protein is Sterol 3-beta-glucosyltransferase of Yarrowia lipolytica (strain CLIB 122 / E 150) (Yeast).